A 363-amino-acid polypeptide reads, in one-letter code: MATLRRLQEAPRHLLVCEKSNFGHDKSRHKHLVETHYHNYRVSFLIPECGLLSKELKSLVMDIGPYYSVKNLPLHELITHEFINTFVKKGSFSALTYNTSIDEDNTVALLPNGKLILSLDKDTYEETGLQGRPSRYSGRKSMKFVISIDLMDLSLNLDSKKYRRISWSFKEKKPLKFDFLLAWHPTGTEESTMMSYFSKYQIQEHQPKVALSTVRELQCPVLRSSGLAGEPEEACSALEFFDWLGAVFCSADLNNEPYNFISTYCCPQPSAVVAQAFLCTITGFILPEKIHVLLEQLCHYFDEPKLAPWVTLTVQGFADSPVAWREKEHGFHKGGEHLYNFVVFNNQDYWLQMAVGANDDCPP.

In terms of assembly, component of nuclear RNase P and RNase MRP ribonucleoproteins. RNase P consists of a catalytic RNA moiety and about 10 protein subunits; POP1, POP4, POP5, POP7, RPP14, RPP21, RPP25, RPP30, RPP38 and RPP40. Within the RNase P complex, POP1, POP7 and RPP25 form the 'finger' subcomplex, POP5, RPP14, RPP40 and homodimeric RPP30 form the 'palm' subcomplex, and RPP21, POP4 and RPP38 form the 'wrist' subcomplex. All subunits of the RNase P complex interact with the catalytic RNA. Several subunits of RNase P are also part of the RNase MRP complex. RNase MRP consists of a catalytic RNA moiety and about 8 protein subunits; POP1, POP7, RPP25, RPP30, RPP38, RPP40 and possibly also POP4 and POP5.

It localises to the nucleus. Its subcellular location is the nucleolus. Its function is as follows. Component of ribonuclease P, a ribonucleoprotein complex that generates mature tRNA molecules by cleaving their 5'-ends. Also a component of the MRP ribonuclease complex, which cleaves pre-rRNA sequences. In Mus musculus (Mouse), this protein is Ribonuclease P protein subunit p40 (Rpp40).